Consider the following 226-residue polypeptide: Leucyl/phenylalanyl-tRNA--protein transferase (226 aa).

The protein belongs to the L/F-transferase family.

It is found in the cytoplasm. The enzyme catalyses N-terminal L-lysyl-[protein] + L-leucyl-tRNA(Leu) = N-terminal L-leucyl-L-lysyl-[protein] + tRNA(Leu) + H(+). The catalysed reaction is N-terminal L-arginyl-[protein] + L-leucyl-tRNA(Leu) = N-terminal L-leucyl-L-arginyl-[protein] + tRNA(Leu) + H(+). It catalyses the reaction L-phenylalanyl-tRNA(Phe) + an N-terminal L-alpha-aminoacyl-[protein] = an N-terminal L-phenylalanyl-L-alpha-aminoacyl-[protein] + tRNA(Phe). Functions in the N-end rule pathway of protein degradation where it conjugates Leu, Phe and, less efficiently, Met from aminoacyl-tRNAs to the N-termini of proteins containing an N-terminal arginine or lysine. The chain is Leucyl/phenylalanyl-tRNA--protein transferase from Pseudomonas aeruginosa (strain UCBPP-PA14).